The following is a 289-amino-acid chain: ATP synthase gamma chain (289 aa).

Belongs to the ATPase gamma chain family. F-type ATPases have 2 components, CF(1) - the catalytic core - and CF(0) - the membrane proton channel. CF(1) has five subunits: alpha(3), beta(3), gamma(1), delta(1), epsilon(1). CF(0) has three main subunits: a, b and c.

Its subcellular location is the cell membrane. In terms of biological role, produces ATP from ADP in the presence of a proton gradient across the membrane. The gamma chain is believed to be important in regulating ATPase activity and the flow of protons through the CF(0) complex. This Mycoplasmopsis synoviae (strain 53) (Mycoplasma synoviae) protein is ATP synthase gamma chain.